We begin with the raw amino-acid sequence, 307 residues long: Small ribosomal subunit biogenesis GTPase RsgA (307 aa).

Positions 1–20 (MPSEHPFSDGISTPNPKETM) are disordered. Polar residues predominate over residues 10 to 20 (GISTPNPKETM). Residues 85–242 (RQDAWKTKLI…LIDSPGLQEF (158 aa)) form the CP-type G domain. GTP-binding positions include 135–138 (NKAD) and 184–192 (GQSGMGKST). Zn(2+) contacts are provided by Cys-266, Cys-271, His-273, and Cys-279.

It belongs to the TRAFAC class YlqF/YawG GTPase family. RsgA subfamily. In terms of assembly, monomer. Associates with 30S ribosomal subunit, binds 16S rRNA. Requires Zn(2+) as cofactor.

It localises to the cytoplasm. Its function is as follows. One of several proteins that assist in the late maturation steps of the functional core of the 30S ribosomal subunit. Helps release RbfA from mature subunits. May play a role in the assembly of ribosomal proteins into the subunit. Circularly permuted GTPase that catalyzes slow GTP hydrolysis, GTPase activity is stimulated by the 30S ribosomal subunit. In Neisseria meningitidis serogroup C / serotype 2a (strain ATCC 700532 / DSM 15464 / FAM18), this protein is Small ribosomal subunit biogenesis GTPase RsgA.